A 258-amino-acid chain; its full sequence is Ubiquinone/menaquinone biosynthesis C-methyltransferase UbiE (258 aa).

Residues Thr81, Asp102, and 130-131 (NA) contribute to the S-adenosyl-L-methionine site.

This sequence belongs to the class I-like SAM-binding methyltransferase superfamily. MenG/UbiE family.

It catalyses the reaction a 2-demethylmenaquinol + S-adenosyl-L-methionine = a menaquinol + S-adenosyl-L-homocysteine + H(+). The enzyme catalyses a 2-methoxy-6-(all-trans-polyprenyl)benzene-1,4-diol + S-adenosyl-L-methionine = a 5-methoxy-2-methyl-3-(all-trans-polyprenyl)benzene-1,4-diol + S-adenosyl-L-homocysteine + H(+). It functions in the pathway quinol/quinone metabolism; menaquinone biosynthesis; menaquinol from 1,4-dihydroxy-2-naphthoate: step 2/2. It participates in cofactor biosynthesis; ubiquinone biosynthesis. Methyltransferase required for the conversion of demethylmenaquinol (DMKH2) to menaquinol (MKH2) and the conversion of 2-polyprenyl-6-methoxy-1,4-benzoquinol (DDMQH2) to 2-polyprenyl-3-methyl-6-methoxy-1,4-benzoquinol (DMQH2). The sequence is that of Ubiquinone/menaquinone biosynthesis C-methyltransferase UbiE from Allorhizobium ampelinum (strain ATCC BAA-846 / DSM 112012 / S4) (Agrobacterium vitis (strain S4)).